A 645-amino-acid chain; its full sequence is Threonine--tRNA ligase (645 aa).

Residues 1–63 (MEQINIQFPD…ETDGSIGIVT (63 aa)) form the TGS domain. The segment at 242 to 540 (DHRKIGKELE…LTEETKGAFP (299 aa)) is catalytic. Zn(2+) is bound by residues Cys-336, His-387, and His-517.

Belongs to the class-II aminoacyl-tRNA synthetase family. Homodimer. Zn(2+) is required as a cofactor.

It localises to the cytoplasm. The enzyme catalyses tRNA(Thr) + L-threonine + ATP = L-threonyl-tRNA(Thr) + AMP + diphosphate + H(+). Catalyzes the attachment of threonine to tRNA(Thr) in a two-step reaction: L-threonine is first activated by ATP to form Thr-AMP and then transferred to the acceptor end of tRNA(Thr). Also edits incorrectly charged L-seryl-tRNA(Thr). This is Threonine--tRNA ligase from Staphylococcus aureus (strain Mu3 / ATCC 700698).